A 156-amino-acid chain; its full sequence is Flagellar assembly factor FliW (156 aa).

This sequence belongs to the FliW family. In terms of assembly, interacts with translational regulator CsrA and flagellin(s).

The protein localises to the cytoplasm. Acts as an anti-CsrA protein, binds CsrA and prevents it from repressing translation of its target genes, one of which is flagellin. Binds to flagellin and participates in the assembly of the flagellum. This is Flagellar assembly factor FliW from Pseudothermotoga lettingae (strain ATCC BAA-301 / DSM 14385 / NBRC 107922 / TMO) (Thermotoga lettingae).